A 109-amino-acid polypeptide reads, in one-letter code: Cysteine-rich venom protein 7 (109 aa).

Positions 1–21 (MSKVFVIILVALMVAISIASA) are cleaved as a signal peptide. 5 disulfides stabilise this stretch: Cys30/Cys47, Cys37/Cys52, Cys46/Cys58, Cys70/Cys90, and Cys78/Cys98.

As to expression, expressed by the venom gland.

The protein localises to the secreted. This Pimpla hypochondriaca (Parasitoid wasp) protein is Cysteine-rich venom protein 7.